The sequence spans 151 residues: Protein NrdI (151 aa).

Belongs to the NrdI family.

Probably involved in ribonucleotide reductase function. The sequence is that of Protein NrdI from Mesoplasma florum (strain ATCC 33453 / NBRC 100688 / NCTC 11704 / L1) (Acholeplasma florum).